Reading from the N-terminus, the 319-residue chain is G-protein coupled receptor 55 (319 aa).

Residues 1–21 are Extracellular-facing; sequence MSQQNTSGDCLFDGVNELMKT. The N-linked (GlcNAc...) asparagine glycan is linked to Asn-5. Residues 22–42 form a helical membrane-spanning segment; it reads LQFAVHIPTFVLGLLLNLLAI. Residues 43 to 58 lie on the Cytoplasmic side of the membrane; that stretch reads HGFSTFLKNRWPDYAA. Residues 59 to 79 form a helical membrane-spanning segment; sequence TSIYMINLAVFDLLLVLSLPF. The Extracellular segment spans residues 80 to 94; that stretch reads KMVLSQVQSPFPSLC. The helical transmembrane segment at 95–115 threads the bilayer; the sequence is TLVECLYFVSMYGSVFTICFI. Over 116 to 137 the chain is Cytoplasmic; that stretch reads SMDRFLAIRYPLLVSHLRSPRK. A helical transmembrane segment spans residues 138–158; sequence IFGICCTIWVLVWTGSIPIYS. Residues 159 to 180 are Extracellular-facing; the sequence is FHGKVEKYMCFHNMSDDTWSAK. N-linked (GlcNAc...) asparagine glycosylation is present at Asn-171. A helical transmembrane segment spans residues 181 to 201; that stretch reads VFFPLEVFGFLLPMGIMGFCC. Residues 202-231 are Cytoplasmic-facing; that stretch reads SRSIHILLGRRDHTQDWVQQKACIYSIAAS. Residues 232–252 traverse the membrane as a helical segment; the sequence is LAVFVVSFLPVHLGFFLQFLV. At 253 to 271 the chain is on the extracellular side; it reads RNSFIVECRAKQSISFFLQ. Residues 272–292 form a helical membrane-spanning segment; it reads LSMCFSNVNCCLDVFCYYFVI. Residues 293 to 319 are Cytoplasmic-facing; that stretch reads KEFRMNIRAHRPSRVQLVLQDTTISRG.

This sequence belongs to the G-protein coupled receptor 1 family. Expressed in the caudate nucleus and putamen, but not detected in the hippocampus, thalamus, pons cerebellum, frontal cortex of the brain or in the liver. Expressed in osteoclasts and osteoblasts. Higly expressed in macrophages and B-cells.

Its subcellular location is the cell membrane. G-protein coupled receptor that binds to several ligands including 2-arachidonoyl lysophosphatidylinositol or lysophosphatidylglucoside with high affinity, leading to rapid and transient activation of numerous intracellular signaling pathways. Induces the Ca(2+) release from intracellular stores via ERK, the heterotrimeric G protein GNA13 and RHOA leading to morphological changes including cell rounding and stress fiber formation. In macrophages, acts downstream of lysophosphatidylglucoside to inhibit the translocation of the phospholipid-transporting ABCA1 to plasma membrane and subsequent cholesterol efflux leading to lipid accumulation and foam cell formation. The polypeptide is G-protein coupled receptor 55 (GPR55) (Homo sapiens (Human)).